A 2248-amino-acid polypeptide reads, in one-letter code: Zinc finger protein 407 (2248 aa).

The span at 1 to 32 (MMDSENKPENDEDEKINKEAQDLTKLSSHNED) shows a compositional bias: basic and acidic residues. Residues 1–84 (MMDSENKPEN…RRKLDEAEPL (84 aa)) are disordered. C2H2-type zinc fingers lie at residues 186–208 (LKCSICGHLFSSCSDLEKHAESH), 215–238 (HTCCHCSHKAESSSALHMHIKQAH), and 244–268 (FSCDLCGFQCSEENLLNAHYLGKTH). 2 disordered regions span residues 291-322 (KKSRTMATKNVHSKPRTSKSIAKNSDSKGLRN) and 494-515 (SETQEAEQGQGSARPPDSGLHS). A compositionally biased stretch (polar residues) spans 494-504 (SETQEAEQGQG). 3 C2H2-type zinc fingers span residues 528–551 (CACTDCGQVATNRTDLEIHVKRCH), 557–581 (FYCRTCDFSSMSRRDLDEHLHSNQH), and 615–639 (FLCTPCNLFFLSEKDVEEHKATEKH). Residues 667 to 700 (ESENAKESMDDSGKASQEEPLKSRVSHGNEVRHS) are disordered. Over residues 669–699 (ENAKESMDDSGKASQEEPLKSRVSHGNEVRH) the composition is skewed to basic and acidic residues. The C2H2-type 7 zinc finger occupies 705 to 728 (FQCKKCFYKTRSSTVLTRHIKLRH). Positions 821-847 (LSQSGGSTKDDELASTTTPKRGRPKGN) are disordered. 2 C2H2-type zinc fingers span residues 850–873 (RTCSHCGLLASSITNLTVHIRRKH) and 879–903 (YLCKVCKYYTVTKGDMERHCATKKH). The tract at residues 910–962 (EASGKHSSDIIVGPEGGSLEAGKKNAGSAVTMSDEHANKPAESPTSVLEKPDR) is disordered. 2 C2H2-type zinc fingers span residues 1017-1040 (NKCLHCEFSAHSSASLELHVKRKH) and 1046-1070 (FYCMACDYYAVTRREMTRHAATEKH). Serine 1262 is subject to Phosphoserine. C2H2-type zinc fingers lie at residues 1444 to 1468 (FHCLLCGKSFYTESNLHQHLASAGH) and 1486 to 1509 (FKCVKCTEPFDSEQNLFLHIKGQH). Residues 1537 to 1561 (NVCKYCGKMCRSSNSMAFLAHIRTH) form a C2H2-type 14; degenerate zinc finger. 8 C2H2-type zinc fingers span residues 1567–1589 (FKCKICHFATAQLGDARNHVKRH), 1595–1618 (YKCHVCGVAFVMKKHLNTHLLGKH), 1628–1650 (FTCHLCDRSFTEKWALNNHMKLH), 1656–1680 (FKCTWPTCHYSFLTASAMKDHYRTH), 1686–1708 (FLCDLCGFAGGTRHALTKHRRQH), 1714–1736 (FKCDECNFASTTQSHLTRHKRVH), 1742–1767 (YRCPWCDYRSNCAENIRKHILHTGKH), and 1773–1796 (YNCPKCDYGTNVPVEFRNHLKEQH).

It localises to the nucleus. May be involved in transcriptional regulation. The protein is Zinc finger protein 407 (ZNF407) of Homo sapiens (Human).